The sequence spans 38 residues: Alpha-2-macroglobulin homolog (38 aa).

Positions 27–30 (CGEQ) form a cross-link, isoglutamyl cysteine thioester (Cys-Gln).

It belongs to the protease inhibitor I39 (alpha-2-macroglobulin) family. As to quaternary structure, homodimer; disulfide-linked. In terms of tissue distribution, hemolymph.

The protein resides in the secreted. Functionally, is able to inhibit all four classes of proteinases by a unique 'trapping' mechanism. This protein has a peptide stretch, called the 'bait region' which contains specific cleavage sites for different proteinases. When a proteinase cleaves the bait region, a conformational change is induced in the protein which traps the proteinase. The entrapped enzyme remains active against low molecular weight substrates (activity against high molecular weight substrates is greatly reduced). Following cleavage in the bait region a thioester bond is hydrolyzed and mediates the covalent binding of the protein to the proteinase. This chain is Alpha-2-macroglobulin homolog, found in Homarus americanus (American lobster).